Reading from the N-terminus, the 70-residue chain is Antimicrobial peptide VpCT1 (70 aa).

The N-terminal stretch at 1–23 is a signal peptide; that stretch reads MKNQFAVLLVALVLLQLFSQSEA. Position 36 is a leucine amide (Leu36). Positions 37–70 are excised as a propeptide; sequence GKRGLRNFDLEQMDDTYEPELSEADLRYLQDLLR.

It belongs to the non-disulfide-bridged peptide (NDBP) superfamily. Short antimicrobial peptide (group 4) family. In terms of tissue distribution, expressed by the venom gland.

The protein resides in the secreted. The protein localises to the target cell membrane. In terms of biological role, antimicrobial peptide with potent activity against bacteria S.aureus (MIC=4.7 uM) and E.coli (MIC=31.5 uM), and pathogenic yeasts C.albicans (MIC=25 uM) and C.glabrata (MIC=12.5 uM). Is not very effective against P.aeruginosa (MIC=150 and &gt;300 uM). Also provokes moderate hemolysis on human erythrocytes (HC(50)=10.5 uM). This is Antimicrobial peptide VpCT1 from Mesomexovis punctatus (Scorpion).